The chain runs to 188 residues: Large ribosomal subunit protein eL18 (188 aa).

K119 participates in a covalent cross-link: Glycyl lysine isopeptide (Lys-Gly) (interchain with G-Cter in SUMO2). A Phosphoserine modification is found at S130. The interval H151–N188 is disordered. A Phosphothreonine modification is found at T158. Basic residues-rich tracts occupy residues S161–G171 and R178–N188. K164 is covalently cross-linked (Glycyl lysine isopeptide (Lys-Gly) (interchain with G-Cter in SUMO2)).

It belongs to the eukaryotic ribosomal protein eL18 family. In terms of assembly, component of the large ribosomal subunit.

The protein localises to the cytoplasm. Its subcellular location is the cytosol. It is found in the rough endoplasmic reticulum. Functionally, component of the large ribosomal subunit. The ribosome is a large ribonucleoprotein complex responsible for the synthesis of proteins in the cell. The chain is Large ribosomal subunit protein eL18 (RPL18) from Canis lupus familiaris (Dog).